A 293-amino-acid chain; its full sequence is Elongation factor Ts (293 aa).

Positions 81–84 (TDFV) are involved in Mg(2+) ion dislocation from EF-Tu.

It belongs to the EF-Ts family.

The protein localises to the cytoplasm. Functionally, associates with the EF-Tu.GDP complex and induces the exchange of GDP to GTP. It remains bound to the aminoacyl-tRNA.EF-Tu.GTP complex up to the GTP hydrolysis stage on the ribosome. The sequence is that of Elongation factor Ts from Methylococcus capsulatus (strain ATCC 33009 / NCIMB 11132 / Bath).